Reading from the N-terminus, the 1088-residue chain is RNA-directed RNA polymerase (1088 aa).

Residues 501–687 enclose the RdRp catalytic domain; the sequence is LSYGDVTRFL…AKRYIAGGKI (187 aa).

This sequence belongs to the reoviridae RNA-directed RNA polymerase family. Interacts with VP3 (Potential). Interacts with VP2; this interaction activates VP1. Interacts with NSP5; this interaction is probably necessary for the formation of functional virus factories. Interacts with NSP2; this interaction is weak. It depends on Mg(2+) as a cofactor.

The protein localises to the virion. The enzyme catalyses RNA(n) + a ribonucleoside 5'-triphosphate = RNA(n+1) + diphosphate. In terms of biological role, RNA-directed RNA polymerase that is involved in both transcription and genome replication. Together with VP3 capping enzyme, forms an enzyme complex positioned near the channels situated at each of the five-fold vertices of the core. Following infection, the outermost layer of the virus is lost, leaving a double-layered particle (DLP) made up of the core and VP6 shell. VP1 then catalyzes the transcription of fully conservative plus-strand genomic RNAs that are extruded through the DLP's channels into the cytoplasm where they function as mRNAs for translation of viral proteins. One copy of each of the viral (+)RNAs is also recruited during core assembly, together with newly synthesized polymerase complexes and VP2. The polymerase of these novo-formed particles catalyzes the synthesis of complementary minus-strands leading to dsRNA formation. To do so, the polymerase specifically recognizes and binds 4 bases 5'-UGUG-3' in the conserved 3'-sequence of plus-strand RNA templates. VP2 presumably activates the autoinhibited VP1-RNA complex to coordinate packaging and genome replication. Once dsRNA synthesis is complete, the polymerase switches to the transcriptional mode, thus providing secondary transcription. This is RNA-directed RNA polymerase from Homo sapiens (Human).